We begin with the raw amino-acid sequence, 261 residues long: Putative hydro-lyase VSAL_I1435 (261 aa).

It belongs to the D-glutamate cyclase family.

The polypeptide is Putative hydro-lyase VSAL_I1435 (Aliivibrio salmonicida (strain LFI1238) (Vibrio salmonicida (strain LFI1238))).